The chain runs to 59 residues: Small ribosomal subunit protein bS21 (59 aa).

The segment at 39–59 (ETPVEKYKRKQRLKNRTKRRR) is disordered. The span at 45 to 59 (YKRKQRLKNRTKRRR) shows a compositional bias: basic residues.

Belongs to the bacterial ribosomal protein bS21 family.

The polypeptide is Small ribosomal subunit protein bS21 (Prochlorococcus marinus (strain SARG / CCMP1375 / SS120)).